Here is a 191-residue protein sequence, read N- to C-terminus: Fe/S biogenesis protein NfuA (191 aa).

Residues C149 and C152 each contribute to the [4Fe-4S] cluster site.

Belongs to the NfuA family. In terms of assembly, homodimer. [4Fe-4S] cluster is required as a cofactor.

Its function is as follows. Involved in iron-sulfur cluster biogenesis. Binds a 4Fe-4S cluster, can transfer this cluster to apoproteins, and thereby intervenes in the maturation of Fe/S proteins. Could also act as a scaffold/chaperone for damaged Fe/S proteins. This chain is Fe/S biogenesis protein NfuA, found in Pectobacterium atrosepticum (strain SCRI 1043 / ATCC BAA-672) (Erwinia carotovora subsp. atroseptica).